A 179-amino-acid chain; its full sequence is UPF0227 protein VS_2073 (179 aa).

This sequence belongs to the UPF0227 family.

The sequence is that of UPF0227 protein VS_2073 from Vibrio atlanticus (strain LGP32) (Vibrio splendidus (strain Mel32)).